A 327-amino-acid polypeptide reads, in one-letter code: RING-H2 finger protein ATL34 (327 aa).

The signal sequence occupies residues 1 to 26 (MTIGKSPILLHHHVIFLLLLVLQVSG). The helical transmembrane segment at 47–67 (AVIIAMLMFTLLFSMLACCVC) threads the bilayer. An RING-type; atypical zinc finger spans residues 128–170 (CAICLNEFEDEETLRLMPPCSHAFHASCIDVWLSSRSTCPVCR). A disordered region spans residues 280 to 327 (LSHMKTLPQARSSREGYRSGSVGSERRGKGKEKEFGEGSFDRLKAEMV). Residues 303 to 327 (SERRGKGKEKEFGEGSFDRLKAEMV) are compositionally biased toward basic and acidic residues.

This sequence belongs to the RING-type zinc finger family. ATL subfamily.

The protein resides in the membrane. It carries out the reaction S-ubiquitinyl-[E2 ubiquitin-conjugating enzyme]-L-cysteine + [acceptor protein]-L-lysine = [E2 ubiquitin-conjugating enzyme]-L-cysteine + N(6)-ubiquitinyl-[acceptor protein]-L-lysine.. Its pathway is protein modification; protein ubiquitination. In Arabidopsis thaliana (Mouse-ear cress), this protein is RING-H2 finger protein ATL34 (ATL34).